A 124-amino-acid polypeptide reads, in one-letter code: Fluoride-specific ion channel FluC (124 aa).

4 helical membrane-spanning segments follow: residues 4–24 (IVAI…LAGW), 32–52 (GFPY…GLIM), 67–87 (IGLT…SYET), and 96–116 (FITA…CTWL). Residues G75 and T78 each contribute to the Na(+) site.

It belongs to the fluoride channel Fluc/FEX (TC 1.A.43) family.

The protein localises to the cell inner membrane. The enzyme catalyses fluoride(in) = fluoride(out). With respect to regulation, na(+) is not transported, but it plays an essential structural role and its presence is essential for fluoride channel function. In terms of biological role, fluoride-specific ion channel. Important for reducing fluoride concentration in the cell, thus reducing its toxicity. This Geobacter metallireducens (strain ATCC 53774 / DSM 7210 / GS-15) protein is Fluoride-specific ion channel FluC.